A 111-amino-acid chain; its full sequence is Microtubule nucleation factor SSNA1 (111 aa).

Residues 6–71 (QALQNHNNEL…ARKTETKNEY (66 aa)) are a coiled coil.

This sequence belongs to the SSNA1 family. As to quaternary structure, self-assembles into fibrils in a head-to-tail fashion.

The protein resides in the cytoplasm. It localises to the cytoskeleton. The protein localises to the flagellum basal body. It is found in the flagellum axoneme. Microtubule-binding protein which stabilizes dynamic microtubules by slowing growth and shrinkage at both plus and minus ends and serves as a sensor of microtubule damage. Induces microtubule branching which is mediated by the formation of long SSNA1 fibrils which guide microtubule protofilaments to split apart from the mother microtubule and form daughter microtubules. Required for cell division. This is Microtubule nucleation factor SSNA1 from Chlamydomonas reinhardtii (Chlamydomonas smithii).